We begin with the raw amino-acid sequence, 308 residues long: GTPase IMAP family member 5 (308 aa).

At 1-283 the chain is on the cytoplasmic side; sequence MEHLQKSTYG…VKSCWSSHTA (283 aa). Positions 24 to 227 constitute an AIG1-type G domain; sequence SSCLRILLVG…HSNDLFLHAE (204 aa). GTP is bound by residues 33-41, serine 54, 151-153, and asparagine 188; these read GKSGCGKSA and RKE. The helical; Anchor for type IV membrane protein transmembrane segment at 284 to 304 threads the bilayer; sequence ACALLIVLGLTLLTTFINLCI. The Mitochondrial intermembrane portion of the chain corresponds to 305-308; it reads SRCK.

Belongs to the TRAFAC class TrmE-Era-EngA-EngB-Septin-like GTPase superfamily. AIG1/Toc34/Toc159-like paraseptin GTPase family. IAN subfamily. Interacts with BAD, BAK1, BAX, BCL2, BCL2L1/Bcl-xL and BCL2L11/BimEL. The interaction with BAX is increased, when cells initiate apoptosis upon IL2 withdrawal. Forms a complex with BCL2L1 or MCL1 and HSPA8/HSC70; the interaction between HSPA8 and BCL2L1 or MCL1 is impaired in the absence of GIMAP5. May interact (via N-terminus) with microtubules. As to expression, expressed in thymus (in thymocytes), spleen (in splenocytes), lymph node and lung. Highly expressed in T lymphocytes. Expressed in B cells and in distinct lineages of hematopoietic bone marrow cells, including natural killer, B, T, myeloid and erythroid lineages. Expressed in liver endothelial cells.

Its subcellular location is the lysosome. It localises to the lysosome membrane. It is found in the endosome. The protein resides in the multivesicular body membrane. The protein localises to the endosome membrane. Its function is as follows. Plays a role in T lymphocyte development and the optimal generation of CD4/CD8 double-positive thymocytes. Inhibitor of GSK3A. May act by sequestering GSK3A in cytoplasmic vesicles and impairing its translocation to the nucleus. Consequently, impairs GSK3A-dependent transcriptional program and regulation of the DNA damage response occurring during T cells proliferation. Required for the survival of bone marrow hematopoietic stem cells, as well as of peripheral T cells, natural killer (NK) and NK T-cell development and the maintenance of normal liver function. May promote the survival of mature T lymphocytes upon cytokine withdrawal. May regulate Ca(2+) homeostasis by modulating lysosomal Ca(2+) stores, preventing its accumulation in the absence of T cell activation. May play a role in mitochondrial DNA segregation in hematopoietic tissues. Is a regulator of liver endothelial cell homeostasis. In Mus musculus (Mouse), this protein is GTPase IMAP family member 5 (Gimap5).